Here is a 204-residue protein sequence, read N- to C-terminus: Demethylsterigmatocystin 6-O-methyltransferase stcP (204 aa).

S-adenosyl-L-methionine-binding positions include 48-49 (GG), Asp73, 93-94 (DF), and Arg109. The active-site Proton acceptor is the His113.

It belongs to the class I-like SAM-binding methyltransferase superfamily. Cation-independent O-methyltransferase family.

The catalysed reaction is 6-demethylsterigmatocystin + S-adenosyl-L-methionine = sterigmatocystin + S-adenosyl-L-homocysteine + H(+). It functions in the pathway mycotoxin biosynthesis; sterigmatocystin biosynthesis. In terms of biological role, norsolorinic acid reductase; part of the gene cluster that mediates the biosynthesis of sterigmatocystin (ST), a polyketide-derived furanocoumarin which is part of the most toxic and carcinogenic compounds among the known mycotoxins. The first step in the biosynthesis of sterigmatocystin is the production of hexanoate by the fatty acid synthase (FAS) units stcJ and stcK. The polyketide backbone is assembled by the non-reducing polyketide synthase stcA by condensation of the starter hexanoyl-CoA and 7 malonyl-CoA extender units followed by cyclization and release of norsolorinic acid. Norsolorinic acid is the first stable intermediate in the biosynthesis of sterigmatocystin and is converted into averantin (AVN) by the ketoreductase stcE which reduces the hexanoate ketone to an alcohol. Averantin is then oxidized into 5'-hydroxyaverantin (HAVN) by the cytochrome P450 monooxygenase stcF. 5'-hydroxyaverantin is further converted to 5'-oxyaverantin (OAVN) by the 5'-hydroxyaverantin dehydrogenase stcG. The next step is the conversion of OAVN into averufin (AVF) which is catalyzed by a yet to be identified enzyme. The cytochrome P450 monooxygenase stcB and the flavin-binding monooxygenase stcW are both required for the conversion of averufin to 1-hydroxyversicolorone. The esterase stcI probably catalyzes the formation of versiconal hemiacetal acetate from 1-hydroxyversicolorone. The oxydoreductase stcN then probably catalyzes the biosynthetic step from versiconal to versicolorin B (VERB). The next step is performed by the versicolorin B desaturase stcL to produce versicolorin A (VERA). The ketoreductase stcU and the cytochrome P450 monooxygenase stcS are involved in the conversion of versicolorin A to demethylsterigmatocystin. The Baeyer-Villiger oxidas stcQ and the reductase stcR might be involved in the biosynthetic step from versicolorin A to demethylsterigmatocystin. The final step in the biosynthesis of sterigmatocystin is the methylation of demethylsterigmatocystin catalyzed by the methyltransferase stcP. This Emericella nidulans (strain FGSC A4 / ATCC 38163 / CBS 112.46 / NRRL 194 / M139) (Aspergillus nidulans) protein is Demethylsterigmatocystin 6-O-methyltransferase stcP.